We begin with the raw amino-acid sequence, 362 residues long: 3-dehydroquinate synthase (362 aa).

Belongs to the archaeal-type DHQ synthase family.

The enzyme catalyses 2-amino-2,3,7-trideoxy-D-lyxo-hept-6-ulosonate + NAD(+) + H2O = 3-dehydroquinate + NH4(+) + NADH + H(+). In terms of biological role, catalyzes the oxidative deamination and cyclization of 2-amino-3,7-dideoxy-D-threo-hept-6-ulosonic acid (ADH) to yield 3-dehydroquinate (DHQ), which is fed into the canonical shikimic pathway of aromatic amino acid biosynthesis. This Methanothrix thermoacetophila (strain DSM 6194 / JCM 14653 / NBRC 101360 / PT) (Methanosaeta thermophila) protein is 3-dehydroquinate synthase.